Consider the following 271-residue polypeptide: Acyl-[acyl-carrier-protein]--UDP-N-acetylglucosamine O-acyltransferase (271 aa).

The protein belongs to the transferase hexapeptide repeat family. LpxA subfamily. In terms of assembly, homotrimer.

It is found in the cytoplasm. The enzyme catalyses a (3R)-hydroxyacyl-[ACP] + UDP-N-acetyl-alpha-D-glucosamine = a UDP-3-O-[(3R)-3-hydroxyacyl]-N-acetyl-alpha-D-glucosamine + holo-[ACP]. Its pathway is glycolipid biosynthesis; lipid IV(A) biosynthesis; lipid IV(A) from (3R)-3-hydroxytetradecanoyl-[acyl-carrier-protein] and UDP-N-acetyl-alpha-D-glucosamine: step 1/6. Functionally, involved in the biosynthesis of lipid A, a phosphorylated glycolipid that anchors the lipopolysaccharide to the outer membrane of the cell. This chain is Acyl-[acyl-carrier-protein]--UDP-N-acetylglucosamine O-acyltransferase, found in Ralstonia nicotianae (strain ATCC BAA-1114 / GMI1000) (Ralstonia solanacearum).